Consider the following 182-residue polypeptide: MSNGTDQAQPPPENPATPVDSKSRKRATPGDDNWLPPDWRTEIRVRTSGTKAGTVDKFYYEPITGRKFRSKNEVLYYLEHGTPKKKSVKTAENGDSHSEHSEGRGSARRQTKSNKKVTEPPPKPLNFDFLNVPEKVTWTGINGSEEAWLPFIGDYKIQESVSQDWDRVFTLVTSQNAGKTMF.

2 disordered regions span residues 1–56 and 80–126; these read MSNG…GTVD and HGTP…KPLN. Residues 25–101 form the MBD domain; sequence KRATPGDDNW…ENGDSHSEHS (77 aa). The span at 92–105 shows a compositional bias: basic and acidic residues; that stretch reads ENGDSHSEHSEGRG. Residues 106-115 show a composition bias toward basic residues; the sequence is SARRQTKSNK.

Homodimer and heterodimer with MBD6. Interacts with DDM1 via its MBD domain. As to expression, mostly expressed in flowers, and, to a lower extent, in seedlings, buds, stems and mature seeds, but barely in roots, exclusively in root meristem cells at tips (at protein level).

It localises to the nucleus. It is found in the chromosome. In terms of biological role, transcriptional regulator that binds CpG islands in promoters where the DNA is methylated at position 5 of cytosine within CpG dinucleotides. In addition, binds specifically methylated m(5)CpNpN but not m(5)CpNpG (N is A, T or C). Plays probably a role in gene silencing. The polypeptide is Methyl-CpG-binding domain-containing protein 5 (MBD5) (Arabidopsis thaliana (Mouse-ear cress)).